Here is a 76-residue protein sequence, read N- to C-terminus: MSKFFRRRKFCKFTAEGIKEIDYKDLNTLRQYLTENGKIVPSRVTGTKSKYQRQLTTAVKRARFLALIPYTDNHDI.

The protein belongs to the bacterial ribosomal protein bS18 family. Part of the 30S ribosomal subunit. Forms a tight heterodimer with protein bS6.

Functionally, binds as a heterodimer with protein bS6 to the central domain of the 16S rRNA, where it helps stabilize the platform of the 30S subunit. This is Small ribosomal subunit protein bS18 from Xylella fastidiosa (strain 9a5c).